The chain runs to 603 residues: Membrane protein insertase YidC (603 aa).

Residues 7 to 27 (FFITIALSVLILAVWQYFYVL) form a helical membrane-spanning segment. The span at 38-51 (RVEQQRVEEQKKAA) shows a compositional bias: basic and acidic residues. The disordered stretch occupies residues 38-76 (RVEQQRVEEQKKAAEAANPGAGTPAPAPGTIPNAPGGDT). The span at 52 to 74 (EAANPGAGTPAPAPGTIPNAPGG) shows a compositional bias: low complexity. The next 5 membrane-spanning stretches (helical) occupy residues 352 to 372 (FDLL…FWLI), 378 to 398 (FLGN…ALFF), 452 to 472 (WPVA…YITI), 497 to 517 (LFGL…WPLI), and 540 to 560 (IFTW…AGLV).

Belongs to the OXA1/ALB3/YidC family. Type 1 subfamily. As to quaternary structure, interacts with the Sec translocase complex via SecD. Specifically interacts with transmembrane segments of nascent integral membrane proteins during membrane integration.

It is found in the cell inner membrane. Its function is as follows. Required for the insertion and/or proper folding and/or complex formation of integral membrane proteins into the membrane. Involved in integration of membrane proteins that insert both dependently and independently of the Sec translocase complex, as well as at least some lipoproteins. Aids folding of multispanning membrane proteins. The protein is Membrane protein insertase YidC of Mesorhizobium japonicum (strain LMG 29417 / CECT 9101 / MAFF 303099) (Mesorhizobium loti (strain MAFF 303099)).